We begin with the raw amino-acid sequence, 1683 residues long: ABC transporter 7 (1683 aa).

A helical transmembrane segment spans residues 24–44 (DYLRILLPAVVIGLSVLNLGF). The disordered stretch occupies residues 53 to 93 (RSKSPSTHAYAPVSNGDNSRPGAHRTDISPDDDAIAQDDED). Residues 81-93 (SPDDDAIAQDDED) are compositionally biased toward acidic residues. Transmembrane regions (helical) follow at residues 127–147 (LSVV…VIAL), 157–177 (TLTG…LATL), 190–210 (HLWN…IGIF), and 221–241 (LAQI…FMAI). A glycan (N-linked (GlcNAc...) asparagine) is linked at Asn-247. 2 helical membrane-spanning segments follow: residues 336-356 (GWAV…KAIL) and 368-388 (SVVW…SLGD). The region spanning 338–664 (AVMSGMFTFA…LGDMLAHVQE (327 aa)) is the ABC transmembrane type-1 1 domain. Residues 451–473 (GDNDESEDGKDGDKDKEDSSDEQ) are disordered. An N-linked (GlcNAc...) asparagine glycan is attached at Asn-489. The next 2 membrane-spanning stretches (helical) occupy residues 496-516 (YLHF…VLLY) and 518-538 (VLGM…PVNI). The N-linked (GlcNAc...) asparagine glycan is linked to Asn-545. Helical transmembrane passes span 602-622 (VWAC…FFSF) and 632-648 (PLHP…FMLL). One can recognise an ABC transporter 1 domain in the interval 700–949 (IALKDAAFIW…GALGEEIAQK (250 aa)). ATP is bound at residue 742 to 749 (GPTGSGKT). The segment at 952-998 (SETPNISRIPSRVPSSVGEGSGNTLLDTDGDDHLSKPKNAKKAKKAE) is disordered. An N-linked (GlcNAc...) asparagine glycan is attached at Asn-956. The helical transmembrane segment at 1016 to 1036 (LYLASMGSWWFWVVAGCIFIS) threads the bilayer. Residues 1028–1351 (VVAGCIFISQ…NILWLVRLYS (324 aa)) form the ABC transmembrane type-1 2 domain. The N-linked (GlcNAc...) asparagine glycan is linked to Asn-1097. 3 consecutive transmembrane segments (helical) span residues 1111-1131 (AQYY…TAFL), 1182-1202 (VDQE…GITV), and 1204-1224 (VVLI…ITIA). Asn-1277 carries an N-linked (GlcNAc...) asparagine glycan. A run of 2 helical transmembrane segments spans residues 1304 to 1324 (LLGD…IGVI) and 1327 to 1347 (GWAG…LWLV). In terms of domain architecture, ABC transporter 2 spans 1392–1649 (VEFINYTTSY…GEGGSFKSMC (258 aa)). Asn-1396 and Asn-1411 each carry an N-linked (GlcNAc...) asparagine glycan. An ATP-binding site is contributed by 1426 to 1433 (GRTGAGKS). N-linked (GlcNAc...) asparagine glycans are attached at residues Asn-1541 and Asn-1552.

The protein belongs to the ABC transporter superfamily.

Its subcellular location is the membrane. Functionally, ABC transporter; part of the gene cluster that mediates the biosynthesis of pyriculol and pyriculariol, two heptaketides that induce lesion formation upon application on rice leaves but are dispensable for pathogenicity. With the MFS transporter MFS1, is most likely responsible for pyriculol and pyriculariol secretion and thereby may contribute to intrinsic resistance. The polypeptide is ABC transporter 7 (Pyricularia oryzae (strain 70-15 / ATCC MYA-4617 / FGSC 8958) (Rice blast fungus)).